Reading from the N-terminus, the 528-residue chain is Low affinity inorganic phosphate transporter 4 (528 aa).

Topologically, residues 1–18 are cytoplasmic; sequence MGLEVLEALDSARTQWYH. Residues 19 to 39 traverse the membrane as a helical segment; the sequence is VTAIVIAGMGFFTDAYDLFCI. Over 40 to 68 the chain is Extracellular; sequence STVSKLLGRLYYFDPSTNKPGKLPPSVNN. The chain crosses the membrane as a helical span at residues 69-89; that stretch reads VVTGVALVGTLSGQLVFGWLG. Over 90 to 96 the chain is Cytoplasmic; sequence DKLGRKK. The chain crosses the membrane as a helical span at residues 97–117; it reads VYGVTLIIMVACAICSGLSFG. At 118–122 the chain is on the extracellular side; sequence SSAKS. The helical transmembrane segment at 123-143 threads the bilayer; it reads VMITLCFFRFWLGFGIGGDYP. Residues 144 to 158 are Cytoplasmic-facing; the sequence is LSATIMSEYANKRTR. The chain crosses the membrane as a helical span at residues 159–179; sequence GAFIAAVFAMQGVGIIFAGLV. The Extracellular portion of the chain corresponds to 180–208; that stretch reads SMVFSGIFKAYYQAPRFNEDPILSTQPEG. A helical transmembrane segment spans residues 209-229; the sequence is DLLWRLILMIGAVPAAMTYYW. Residues 230-292 are Cytoplasmic-facing; sequence RMKMPETGRY…SEFFNRHGRH (63 aa). The helical transmembrane segment at 293-313 threads the bilayer; it reads LIGTMSCWFLLDIAFYSQNLT. At 314–341 the chain is on the extracellular side; it reads QKDIYPAMGLIRQDKEMNAIDEVFQTSR. Residues 342-362 traverse the membrane as a helical segment; sequence AMFVVALFGTFPGYWFTVFFI. The Cytoplasmic segment spans residues 363-371; sequence EKLGRFKIQ. The chain crosses the membrane as a helical span at residues 372-392; the sequence is LVGFFMMSFFMFVIGVKYEYL. The Extracellular segment spans residues 393-401; sequence KDENKNLFA. The chain crosses the membrane as a helical span at residues 402–422; that stretch reads LLYGLTFFFANFGPNSTTFVL. At 423 to 433 the chain is on the cytoplasmic side; the sequence is PAELFPTRVRS. The chain crosses the membrane as a helical span at residues 434–454; that stretch reads TCHAFSAASGKAGAMVGAFGI. The Extracellular segment spans residues 455-468; the sequence is QYYTLDGTPRKIRR. A helical membrane pass occupies residues 469 to 489; it reads AMMILAFTNLIGFFCTFLVTE. Residues 490–528 are Cytoplasmic-facing; the sequence is TKGRSLEEISGEDGRESELTATPNDRAPGIRQDSRTEKM. Over residues 497-507 the composition is skewed to basic and acidic residues; sequence EISGEDGRESE. A disordered region spans residues 497-528; sequence EISGEDGRESELTATPNDRAPGIRQDSRTEKM.

It belongs to the major facilitator superfamily. Phosphate:H(+) symporter (TC 2.A.1.9) family. Mostly expressed in mycorrhizal roots. Also observed in root tips of non-mycorrhizal roots, in a phosphate (Pi) depended-manner, highest expression levels being observed in low Pi conditions.

It localises to the cell membrane. The enzyme catalyses phosphate(in) + H(+)(in) = phosphate(out) + H(+)(out). Functionally, low-affinity transporter for external inorganic phosphate (Pi) probably involved in the acquisition of phosphate released by arbuscular mycorrhizal (AM) fungi (e.g. Gigaspora gigantea, Glomus versiforme and G.intraradices) during AM symbiosis; required for propper mycorrhizal arbuscule morphology. Acts as a Pi-sensing machinery at the root tip level, independently of AM fungi, involved in the regulation of early root branching and lateral roots formation. This Medicago truncatula (Barrel medic) protein is Low affinity inorganic phosphate transporter 4.